The following is a 228-amino-acid chain: Cutinase (228 aa).

The first 16 residues, 1–16 (MKFLSIISLAVSLVAA), serve as a signal peptide directing secretion. Residues cysteine 49 and cysteine 129 are joined by a disulfide bond. Catalysis depends on serine 140, which acts as the Nucleophile. Cysteine 191 and cysteine 198 form a disulfide bridge. The active site involves aspartate 195. The active-site Proton donor/acceptor is histidine 208.

It belongs to the cutinase family. In terms of processing, the 2 disulfide bonds play a critical role in holding the catalytic residues in juxta-position; reduction of the disulfide bridges results in the complete inactivation of the enzyme.

The protein localises to the secreted. It carries out the reaction cutin + H2O = cutin monomers.. With respect to regulation, partially inhibited by berberine; higher inhibitory effects are observed with longer chain polyester substrates. Functionally, catalyzes the hydrolysis of complex carboxylic polyesters found in the cell wall of plants. Degrades cutin, a macromolecule that forms the structure of the plant cuticle. Allows pathogenic fungi to penetrate through the cuticular barrier into the host plant during the initial stage of fungal infection. The sequence is that of Cutinase (CUTA) from Colletotrichum truncatum (Anthracnose fungus).